Here is a 631-residue protein sequence, read N- to C-terminus: UvrABC system protein C (631 aa).

In terms of domain architecture, GIY-YIG spans 26–105 (SSPGVYQFKN…IKELKPRYNV (80 aa)). Residues 219–254 (SATIRSLNERMLSFAKELKFEQAAELKTQIDSLKRY) enclose the UVR domain.

This sequence belongs to the UvrC family. In terms of assembly, interacts with UvrB in an incision complex.

It localises to the cytoplasm. In terms of biological role, the UvrABC repair system catalyzes the recognition and processing of DNA lesions. UvrC both incises the 5' and 3' sides of the lesion. The N-terminal half is responsible for the 3' incision and the C-terminal half is responsible for the 5' incision. In Chlorobium phaeobacteroides (strain DSM 266 / SMG 266 / 2430), this protein is UvrABC system protein C.